The chain runs to 366 residues: L-Ala-D/L-Glu epimerase (366 aa).

Positions 24, 135, and 160 each coordinate substrate. The active-site Proton acceptor; specific for (R)-substrate epimerization is Lys162. Mg(2+) contacts are provided by Asp191, Glu219, and Asp244. Catalysis depends on Lys268, which acts as the Proton acceptor; specific for (S)-substrate epimerization. Positions 296, 298, 321, and 323 each coordinate substrate.

This sequence belongs to the mandelate racemase/muconate lactonizing enzyme family. In terms of assembly, homooctamer; tetramer of dimers. It depends on Mg(2+) as a cofactor.

The enzyme catalyses L-alanyl-L-glutamate = L-alanyl-D-glutamate. It participates in cell wall degradation; peptidoglycan degradation. Functionally, catalyzes the epimerization of L-Ala-D-Glu to L-Ala-L-Glu and has probably a role in the metabolism of the murein peptide, of which L-Ala-D-Glu is a component. Is also able to catalyze the reverse reaction and the epimerization of the other Ala-X dipeptides L-Ala-L-Asp, L-Ala-L-Leu, L-Ala-L-Met, and L-Ala-L-Ser. Is not able to epimerize other L-Ala-X dipeptides. Is also active with L-Ser-L-Glu and, oddly, L-Pro-L-Glu, but not with L-Glu-L-Glu, L-Lys-L-Glu, L-Lys-L-Ala, or D-Ala-D-Ala. This chain is L-Ala-D/L-Glu epimerase (ykfB), found in Bacillus subtilis (strain 168).